The sequence spans 1510 residues: Chromosome partition protein MukB (1510 aa).

Residues 6 to 30 are a coiled coil; it reads ELENEIELESDEVIMENENVEEIVD. Residue 75–82 participates in ATP binding; that stretch reads GGNGAGKS. Coiled coils occupy residues 346-506, 553-611, 673-706, 821-846, 876-1064, 1094-1149, and 1249-1304; these read QHRL…HKMS, QQTP…EDIS, MQSQLVKERELTMQRDQLEQKRLQLDEQISRLSQ, SAAREKRLEELQIERDEVAEQHAQIA, EALM…IQLQ, ERAR…RELV, and DAIE…LQNI. A flexible hinge region spans residues 707–824; that stretch reads PDGSEDPRLN…EIPLFGSAAR (118 aa).

Belongs to the SMC family. MukB subfamily. In terms of assembly, homodimerization via its hinge domain. Binds to DNA via its C-terminal region. Interacts, and probably forms a ternary complex, with MukE and MukF via its C-terminal region. The complex formation is stimulated by calcium or magnesium. Interacts with tubulin-related protein FtsZ.

The protein resides in the cytoplasm. It is found in the nucleoid. In terms of biological role, plays a central role in chromosome condensation, segregation and cell cycle progression. Functions as a homodimer, which is essential for chromosome partition. Involved in negative DNA supercoiling in vivo, and by this means organize and compact chromosomes. May achieve or facilitate chromosome segregation by condensation DNA from both sides of a centrally located replisome during cell division. In Haemophilus influenzae (strain PittGG), this protein is Chromosome partition protein MukB.